The following is a 260-amino-acid chain: Thiazole synthase (260 aa).

Residue K96 is the Schiff-base intermediate with DXP of the active site. 1-deoxy-D-xylulose 5-phosphate is bound by residues G157, 184–185 (AG), and 206–207 (NT).

Belongs to the ThiG family. Homotetramer. Forms heterodimers with either ThiH or ThiS.

It localises to the cytoplasm. It catalyses the reaction [ThiS sulfur-carrier protein]-C-terminal-Gly-aminoethanethioate + 2-iminoacetate + 1-deoxy-D-xylulose 5-phosphate = [ThiS sulfur-carrier protein]-C-terminal Gly-Gly + 2-[(2R,5Z)-2-carboxy-4-methylthiazol-5(2H)-ylidene]ethyl phosphate + 2 H2O + H(+). The protein operates within cofactor biosynthesis; thiamine diphosphate biosynthesis. Its function is as follows. Catalyzes the rearrangement of 1-deoxy-D-xylulose 5-phosphate (DXP) to produce the thiazole phosphate moiety of thiamine. Sulfur is provided by the thiocarboxylate moiety of the carrier protein ThiS. In vitro, sulfur can be provided by H(2)S. The sequence is that of Thiazole synthase from Rhodopseudomonas palustris (strain BisB18).